The chain runs to 75 residues: Scuwaprin-a (75 aa).

Residues 1 to 24 (MSSGGLLLLLGLLTLWAELTPVSG) form the signal peptide. The WAP domain maps to 27 to 72 (RPKKPGLCPPRPQKPPCVKECKNDWSCPGQQKCCSYGCIDECRDPI). Disulfide bonds link cysteine 34–cysteine 60, cysteine 43–cysteine 64, cysteine 47–cysteine 59, and cysteine 53–cysteine 68.

It belongs to the venom waprin family. As to expression, expressed by the venom gland.

Its subcellular location is the secreted. In terms of biological role, damages membranes of susceptible bacteria. Has no hemolytic activity. Not toxic to mice. Does not inhibit the proteinases elastase and cathepsin G. In Oxyuranus scutellatus scutellatus (Australian taipan), this protein is Scuwaprin-a.